A 149-amino-acid polypeptide reads, in one-letter code: Alpha-crystallin A chain (149 aa).

One can recognise a sHSP domain in the interval 41-149 (LFRTVLESGI…DTSYSERPIP (109 aa)). Positions 89, 91, and 96 each coordinate Zn(2+).

It belongs to the small heat shock protein (HSP20) family. Heteropolymer composed of three CRYAA and one CRYAB subunits. Inter-subunit bridging via zinc ions enhances stability, which is crucial as there is no protein turn over in the lens. Zinc coordination is achieved at least by His-89, Glu-91 and His-96. His-83 and Glu-85 come from the same molecule within the oligomer, while His-90 residue is provided by another molecule. Can also form homodimers and homotetramers (dimers of dimers) which serve as the building blocks of homooligomers.

Its subcellular location is the cytoplasm. It is found in the nucleus. Functionally, contributes to the transparency and refractive index of the lens. May act as a chaperone, preventing aggregation of various proteins under a wide range of stress conditions. The sequence is that of Alpha-crystallin A chain (CRYAA) from Trachemys scripta elegans (Red-eared slider turtle).